The sequence spans 556 residues: Formate--tetrahydrofolate ligase 1 (556 aa).

65–72 contributes to the ATP binding site; sequence TPAGEGKS.

It belongs to the formate--tetrahydrofolate ligase family.

It carries out the reaction (6S)-5,6,7,8-tetrahydrofolate + formate + ATP = (6R)-10-formyltetrahydrofolate + ADP + phosphate. It functions in the pathway one-carbon metabolism; tetrahydrofolate interconversion. The chain is Formate--tetrahydrofolate ligase 1 from Streptococcus pyogenes serotype M2 (strain MGAS10270).